Consider the following 215-residue polypeptide: UPF0502 protein YceH (215 aa).

Belongs to the UPF0502 family.

In Salmonella paratyphi A (strain ATCC 9150 / SARB42), this protein is UPF0502 protein YceH.